Reading from the N-terminus, the 208-residue chain is Ribosomal RNA large subunit methyltransferase E (208 aa).

Glycine 62, tryptophan 64, aspartate 82, aspartate 98, and aspartate 123 together coordinate S-adenosyl-L-methionine. The Proton acceptor role is filled by lysine 163.

Belongs to the class I-like SAM-binding methyltransferase superfamily. RNA methyltransferase RlmE family.

The protein localises to the cytoplasm. The catalysed reaction is uridine(2552) in 23S rRNA + S-adenosyl-L-methionine = 2'-O-methyluridine(2552) in 23S rRNA + S-adenosyl-L-homocysteine + H(+). Its function is as follows. Specifically methylates the uridine in position 2552 of 23S rRNA at the 2'-O position of the ribose in the fully assembled 50S ribosomal subunit. The sequence is that of Ribosomal RNA large subunit methyltransferase E from Edwardsiella ictaluri (strain 93-146).